A 527-amino-acid chain; its full sequence is ARS-binding protein 2 (527 aa).

Disordered stretches follow at residues 160–184 (PDVNSSSISTMRTSTSPSNWIHSAS), 219–265 (SHHM…NSHN), and 282–344 (IDPD…IKRL). Residues 164–177 (SSSISTMRTSTSPS) show a composition bias toward low complexity. Over residues 225–239 (RGSQQAHQTTPQNHS) the composition is skewed to polar residues. A compositionally biased stretch (basic and acidic residues) spans 284–303 (PDWHQWPDDLRDVSSPKESD). A phosphoserine mark is found at Ser-297, Ser-298, and Ser-302. Residues 328–343 (PRKRGRPPGARNKIKR) are compositionally biased toward basic residues.

Its subcellular location is the nucleus. Binds, preferentially, to the Maundrell ARS consensus sequence within ARS3002. This chain is ARS-binding protein 2 (abp2), found in Schizosaccharomyces pombe (strain 972 / ATCC 24843) (Fission yeast).